We begin with the raw amino-acid sequence, 68 residues long: Protein SlyX homolog (68 aa).

The protein belongs to the SlyX family.

This Pseudomonas syringae pv. syringae (strain B728a) protein is Protein SlyX homolog.